Here is a 335-residue protein sequence, read N- to C-terminus: NADH-quinone oxidoreductase subunit H (335 aa).

The next 8 helical transmembrane spans lie at 11-31 (VILTVVRAIVVLLAVVVCGAL), 81-101 (MIFTLAPVVAMSALLIAFVVI), 114-134 (IGLLFFFAMAGLSVYAVLFAG), 154-174 (VSYEVFLGLALMGVVVQVGSF), 187-207 (LWFIIPQFFGFCTFFIAGVAV), 238-258 (FFVGEYIGIILISALLVTLFF), 270-290 (QVPFLWFALKTAFFIMLFILL), and 307-327 (WKFCLPLTLINLLVTAAVVLY).

This sequence belongs to the complex I subunit 1 family. NDH-1 is composed of 13 different subunits. Subunits NuoA, H, J, K, L, M, N constitute the membrane sector of the complex.

The protein localises to the cell inner membrane. The catalysed reaction is a quinone + NADH + 5 H(+)(in) = a quinol + NAD(+) + 4 H(+)(out). In terms of biological role, NDH-1 shuttles electrons from NADH, via FMN and iron-sulfur (Fe-S) centers, to quinones in the respiratory chain. The immediate electron acceptor for the enzyme in this species is believed to be ubiquinone. Couples the redox reaction to proton translocation (for every two electrons transferred, four hydrogen ions are translocated across the cytoplasmic membrane), and thus conserves the redox energy in a proton gradient. This subunit may bind ubiquinone. This is NADH-quinone oxidoreductase subunit H from Pseudomonas entomophila (strain L48).